The sequence spans 459 residues: Glutamyl-tRNA reductase (459 aa).

Substrate is bound by residues 49 to 52 (TCNR), Ser-109, 114 to 116 (EQQ), and Gln-120. The active-site Nucleophile is the Cys-50. 189–194 (GAGAMG) contributes to the NADP(+) binding site.

The protein belongs to the glutamyl-tRNA reductase family. Homodimer.

It catalyses the reaction (S)-4-amino-5-oxopentanoate + tRNA(Glu) + NADP(+) = L-glutamyl-tRNA(Glu) + NADPH + H(+). The protein operates within porphyrin-containing compound metabolism; protoporphyrin-IX biosynthesis; 5-aminolevulinate from L-glutamyl-tRNA(Glu): step 1/2. In terms of biological role, catalyzes the NADPH-dependent reduction of glutamyl-tRNA(Glu) to glutamate 1-semialdehyde (GSA). This Mycolicibacterium paratuberculosis (strain ATCC BAA-968 / K-10) (Mycobacterium paratuberculosis) protein is Glutamyl-tRNA reductase.